The sequence spans 362 residues: Tryptophan 2,3-dioxygenase (362 aa).

Substrate contacts are provided by residues 40-44 (FIIVH) and Arg-111. Position 297 (His-297) interacts with heme. Thr-311 contacts substrate.

It belongs to the tryptophan 2,3-dioxygenase family. As to quaternary structure, homotetramer. Requires heme as cofactor.

The enzyme catalyses L-tryptophan + O2 = N-formyl-L-kynurenine. Its pathway is amino-acid degradation; L-tryptophan degradation via kynurenine pathway; L-kynurenine from L-tryptophan: step 1/2. Heme-dependent dioxygenase that catalyzes the oxidative cleavage of the L-tryptophan (L-Trp) pyrrole ring and converts L-tryptophan to N-formyl-L-kynurenine. Catalyzes the oxidative cleavage of the indole moiety. The chain is Tryptophan 2,3-dioxygenase from Alteromonas mediterranea (strain DSM 17117 / CIP 110805 / LMG 28347 / Deep ecotype).